Reading from the N-terminus, the 46-residue chain is Protein YmiA (46 aa).

The chain crosses the membrane as a helical span at residues 22 to 42; the sequence is AWLAVFLGSALFWVVVALLIW.

The protein localises to the cell inner membrane. The sequence is that of Protein YmiA (ymiA) from Escherichia coli (strain K12).